A 677-amino-acid polypeptide reads, in one-letter code: MAQATISITVNGEAKEVEATTTGVELFAEDKNIIAVKINGENRDLYTPLNDGDTVDPIALDSEDGLAIMRHSATHVMAQAVQEVYPNAKLGVGPVIKDGFYYDFQVDQPFTPNDLKDIEKRMQRIIKSSQSFRRRSVTEEEALKEEADQPFKIELIEDKEAHLDPAAATEISEKELSFYDNVDRDGNVVWKDLCRGPHLPNTRYIKAFKIERSAAAYWRGSEKNPTMQRVYGTAWATKEDLKAYQTRLEEAAKRDHRKLGAEMDLFSFPDEIGPGLAVFHPKGAAVINAMEDYSREMHRKHHYSFVQTPHITKGGLYETSGHLHWYKDGMYPPMHLDEEKDADGNITKPGADYYLKPMNCPMHNLIFKSRQRSYRELPLRLFEFGTVYRYEKSGEVHGLTRVRGLTQDDSHIYCTREQMKDELTSLLTFVLNLLKDFGLTDFYLELSTKDPNKYVGSDEIWEEATNTLAEVAKESNLELVDDPCGAAFYGPKISVQARDAIGRTWQVSTIQLDFNLPERFQLEYIAKDGTHQRPVMIHRALFGSIERFFAVLLEHYAGAFPAWLAPVQVLGVPVADEFAPHLAGFVKSLEDEMVRCEIDYSDDRFGKKIRNASKSKVPFILIVGEEDMNNNAVSFRFRDGSQLNGVPVDTAREQILTVIKKRVQVNSADDFNAAVAE.

Residues 1–59 enclose the TGS domain; it reads MAQATISITVNGEAKEVEATTTGVELFAEDKNIIAVKINGENRDLYTPLNDGDTVDPIA. A catalytic region spans residues 255-561; sequence DHRKLGAEMD…LLEHYAGAFP (307 aa). Residues cysteine 360, histidine 411, and histidine 538 each contribute to the Zn(2+) site.

This sequence belongs to the class-II aminoacyl-tRNA synthetase family. Homodimer. Requires Zn(2+) as cofactor.

It localises to the cytoplasm. It carries out the reaction tRNA(Thr) + L-threonine + ATP = L-threonyl-tRNA(Thr) + AMP + diphosphate + H(+). Catalyzes the attachment of threonine to tRNA(Thr) in a two-step reaction: L-threonine is first activated by ATP to form Thr-AMP and then transferred to the acceptor end of tRNA(Thr). Also edits incorrectly charged L-seryl-tRNA(Thr). This Bifidobacterium longum (strain NCC 2705) protein is Threonine--tRNA ligase.